The chain runs to 371 residues: 4-hydroxy-3-methylbut-2-en-1-yl diphosphate synthase (flavodoxin) (371 aa).

Residues Cys271, Cys274, Cys306, and Glu313 each coordinate [4Fe-4S] cluster.

The protein belongs to the IspG family. [4Fe-4S] cluster serves as cofactor.

It carries out the reaction (2E)-4-hydroxy-3-methylbut-2-enyl diphosphate + oxidized [flavodoxin] + H2O + 2 H(+) = 2-C-methyl-D-erythritol 2,4-cyclic diphosphate + reduced [flavodoxin]. Its pathway is isoprenoid biosynthesis; isopentenyl diphosphate biosynthesis via DXP pathway; isopentenyl diphosphate from 1-deoxy-D-xylulose 5-phosphate: step 5/6. In terms of biological role, converts 2C-methyl-D-erythritol 2,4-cyclodiphosphate (ME-2,4cPP) into 1-hydroxy-2-methyl-2-(E)-butenyl 4-diphosphate. The polypeptide is 4-hydroxy-3-methylbut-2-en-1-yl diphosphate synthase (flavodoxin) (Actinobacillus succinogenes (strain ATCC 55618 / DSM 22257 / CCUG 43843 / 130Z)).